Here is a 125-residue protein sequence, read N- to C-terminus: S-adenosylmethionine decarboxylase proenzyme (125 aa).

Ser71 acts as the Schiff-base intermediate with substrate; via pyruvic acid in catalysis. Ser71 carries the pyruvic acid (Ser); by autocatalysis modification. The Proton acceptor; for processing activity role is filled by His76. The active-site Proton donor; for catalytic activity is the Cys91.

The protein belongs to the prokaryotic AdoMetDC family. Type 1 subfamily. In terms of assembly, heterotetramer of two alpha and two beta chains arranged as a dimer of alpha/beta heterodimers. Requires pyruvate as cofactor. In terms of processing, is synthesized initially as an inactive proenzyme. Formation of the active enzyme involves a self-maturation process in which the active site pyruvoyl group is generated from an internal serine residue via an autocatalytic post-translational modification. Two non-identical subunits are generated from the proenzyme in this reaction, and the pyruvate is formed at the N-terminus of the alpha chain, which is derived from the carboxyl end of the proenzyme. The post-translation cleavage follows an unusual pathway, termed non-hydrolytic serinolysis, in which the side chain hydroxyl group of the serine supplies its oxygen atom to form the C-terminus of the beta chain, while the remainder of the serine residue undergoes an oxidative deamination to produce ammonia and the pyruvoyl group blocking the N-terminus of the alpha chain.

The catalysed reaction is S-adenosyl-L-methionine + H(+) = S-adenosyl 3-(methylsulfanyl)propylamine + CO2. It participates in amine and polyamine biosynthesis; S-adenosylmethioninamine biosynthesis; S-adenosylmethioninamine from S-adenosyl-L-methionine: step 1/1. Functionally, catalyzes the decarboxylation of S-adenosylmethionine to S-adenosylmethioninamine (dcAdoMet), the propylamine donor required for the synthesis of the polyamines spermine and spermidine from the diamine putrescine. In Pyrobaculum islandicum (strain DSM 4184 / JCM 9189 / GEO3), this protein is S-adenosylmethionine decarboxylase proenzyme.